The chain runs to 317 residues: Ribosomal protein L11 methyltransferase (317 aa).

S-adenosyl-L-methionine-binding residues include Thr158, Gly179, Asp201, and Asn244.

Belongs to the methyltransferase superfamily. PrmA family.

The protein resides in the cytoplasm. The enzyme catalyses L-lysyl-[protein] + 3 S-adenosyl-L-methionine = N(6),N(6),N(6)-trimethyl-L-lysyl-[protein] + 3 S-adenosyl-L-homocysteine + 3 H(+). Its function is as follows. Methylates ribosomal protein L11. This is Ribosomal protein L11 methyltransferase from Streptococcus pyogenes serotype M3 (strain ATCC BAA-595 / MGAS315).